Here is an 87-residue protein sequence, read N- to C-terminus: MTRYFCCGSYFPGYPIYGTNFHGTFRATPLNCVVPLGSPLNYGCGCNGYSSLGYSFGGSNINNLGGCYGGSFYRPWGSGSGFGYSTY.

An 11 X 2 AA repeats of G-[YCGS] region spans residues 43 to 84 (GCGCNGYSSLGYSFGGSNINNLGGCYGGSFYRPWGSGSGFGY).

It belongs to the KRTAP type 7 family. Interacts with hair keratins. As to expression, expressed in the upper portion of the hair cortex.

In terms of biological role, in the hair cortex, hair keratin intermediate filaments are embedded in an interfilamentous matrix, consisting of hair keratin-associated proteins (KRTAP), which are essential for the formation of a rigid and resistant hair shaft through their extensive disulfide bond cross-linking with abundant cysteine residues of hair keratins. The matrix proteins include the high-sulfur and high-glycine-tyrosine keratins. The chain is Keratin-associated protein 7-1 (KRTAP7-1) from Homo sapiens (Human).